Reading from the N-terminus, the 465-residue chain is Cysteine--tRNA ligase (465 aa).

Cys28 provides a ligand contact to Zn(2+). Positions 30–40 match the 'HIGH' region motif; that stretch reads PTVYNYIHVGN. The Zn(2+) site is built by Cys208, His233, and Glu237. The short motif at 265 to 269 is the 'KMSKS' region element; the sequence is KMSKS. Position 268 (Lys268) interacts with ATP.

Belongs to the class-I aminoacyl-tRNA synthetase family. In terms of assembly, monomer. It depends on Zn(2+) as a cofactor.

Its subcellular location is the cytoplasm. It catalyses the reaction tRNA(Cys) + L-cysteine + ATP = L-cysteinyl-tRNA(Cys) + AMP + diphosphate. This Exiguobacterium sp. (strain ATCC BAA-1283 / AT1b) protein is Cysteine--tRNA ligase.